The primary structure comprises 833 residues: Interleukin enhancer-binding factor 3 homolog (833 aa).

Positions 11–379 (RIFVNDDRHV…PMKRPIEEES (369 aa)) constitute a DZF domain. Disordered regions lie at residues 65 to 86 (VNAL…GEQA) and 339 to 403 (DPLP…KAEP). Residue T70 is modified to Phosphothreonine. The span at 373 to 385 (RPIEEESTDEKNP) shows a compositional bias: basic and acidic residues. 2 consecutive DRBM domains span residues 402–471 (EPAQ…DMGL) and 527–593 (HGKN…KLFP). Disordered stretches follow at residues 597–651 (NSEV…FNQG), 702–762 (QSDS…GGGA), and 775–833 (AYPS…YQYR). A compositionally biased stretch (basic residues) spans 629–639 (GRGRGRGRGRG). A compositionally biased stretch (gly residues) spans 640–651 (RGFNNGGGFNQG). Polar residues predominate over residues 775-818 (AYPSQVTGGQEYNYEGYSNQSNYNSQGGANQNFGGNSAPYNSGQ).

The protein resides in the nucleus. The protein localises to the nucleolus. It localises to the cytoplasm. RNA-binding protein that plays an essential role in the biogenesis of circular RNAs (circRNAs) which are produced by back-splicing circularization of pre-mRNAs. Within the nucleus, promotes circRNAs processing by stabilizing the regulatory elements residing in the flanking introns of the circularized exons. Plays thereby a role in the back-splicing of a subset of circRNAs. As a consequence, participates in a wide range of transcriptional and post-transcriptional processes. Binds to poly-U elements and AU-rich elements (AREs) in the 3'-UTR of target mRNAs. Upon viral infection, ILF3 accumulates in the cytoplasm and participates in the innate antiviral response. Mechanistically, ILF3 becomes phosphorylated and activated by the double-stranded RNA-activated protein kinase/PKR which releases ILF3 from cellular mature circRNAs. In turn, unbound ILF3 molecules are able to interact with and thus inhibit viral mRNAs. This Danio rerio (Zebrafish) protein is Interleukin enhancer-binding factor 3 homolog (ilf3).